Consider the following 417-residue polypeptide: PRKCA-binding protein (417 aa).

The PDZ domain maps to 22–105; it reads KVTLQKDAQN…EVTIHYNKLQ (84 aa). Zn(2+) is bound by residues cysteine 44 and cysteine 46. Position 82 is a phosphothreonine (threonine 82). Residues 144–357 form the AH domain; the sequence is LCNDGLVKRL…CYSVLRDADV (214 aa). Residues 375–417 form a disordered region; sequence QDEFTDGEDEEDEDEEDTAAGEPPRDSRGAAGPLDKGGSWCNS. The segment covering 377–393 has biased composition (acidic residues); sequence EFTDGEDEEDEDEEDTA. Cysteine 415 carries S-palmitoyl cysteine; by DHHC8 lipidation.

Monomer and homodimer. Interacts with CXADR. Interacts presynaptically with the glutamate receptors GRIA2, GRIA3, GRIK3, isoform 3 of GRIA4, isoform A of GRM4, GRM7 and GRM8; with NAPA and NAPB; and with BTG2. The interaction with NAPA and NAPB disrupts the interaction with GRIA2, conducting to the internalization of GRIA2. Interacts with PRKCA; with the amine transporters SLC6A2 and SLC6A3; with the channels ASIC1 and ASIC2; with the GTP-binding proteins ARF1 and ARF3; with the ephrin receptor tyrosine kinases EPHA7, EPHB1 and EPHB2; with ERBB2 and through its PDZ domain with the C-terminal tail of PRLHR. Interacts with UNC5A. Interacts (via AH domain) with NCS1/FREQ; in a calcium-dependent manner. Interacts with F-actin and associates with the ARP2/3 complex. Interacts (via PDZ domain) with ARF1 (activated); the interaction blocks Arp2/3 complex inhibition. Interacts with SORCS3. Post-translationally, phosphorylation at Thr-82 appears to inhibit the interaction with AMPA receptors. Palmitoylation on Cys-415 is essential for long-term synaptic depression (LTD).

Its subcellular location is the cytoplasm. The protein localises to the perinuclear region. It localises to the membrane. It is found in the postsynaptic density. The protein resides in the synapse. Its subcellular location is the synaptosome. The protein localises to the cytoskeleton. Its function is as follows. Probable adapter protein that bind to and organize the subcellular localization of a variety of membrane proteins containing some PDZ recognition sequence. Involved in the clustering of various receptors, possibly by acting at the receptor internalization level. Plays a role in synaptic plasticity by regulating the trafficking and internalization of AMPA receptors. May be regulated upon PRKCA activation. May regulate ASIC1/ASIC3 channel. Regulates actin polymerization by inhibiting the actin-nucleating activity of the Arp2/3 complex; the function is competitive with nucleation promoting factors and is linked to neuronal morphology regulation and AMPA receptor (AMPAR) endocytosis. Via interaction with the Arp2/3 complex involved in regulation of synaptic plasicity of excitatory synapses and required for spine shrinkage during long-term depression (LTD). Involved in regulation of astrocyte morphology, antagonistic to Arp2/3 complex activator WASL/N-WASP function. The chain is PRKCA-binding protein (PICK1) from Bos taurus (Bovine).